The chain runs to 1409 residues: DNA-directed RNA polymerase subunit beta' (1409 aa).

C70, C72, C85, and C88 together coordinate Zn(2+). Mg(2+) is bound by residues D458, D460, and D462. Positions 813, 887, 894, and 897 each coordinate Zn(2+).

This sequence belongs to the RNA polymerase beta' chain family. In terms of assembly, the RNAP catalytic core consists of 2 alpha, 1 beta, 1 beta' and 1 omega subunit. When a sigma factor is associated with the core the holoenzyme is formed, which can initiate transcription. The cofactor is Mg(2+). It depends on Zn(2+) as a cofactor.

It carries out the reaction RNA(n) + a ribonucleoside 5'-triphosphate = RNA(n+1) + diphosphate. In terms of biological role, DNA-dependent RNA polymerase catalyzes the transcription of DNA into RNA using the four ribonucleoside triphosphates as substrates. This chain is DNA-directed RNA polymerase subunit beta', found in Delftia acidovorans (strain DSM 14801 / SPH-1).